The following is a 62-amino-acid chain: Large ribosomal subunit protein eL24 (62 aa).

Zn(2+) is bound by residues cysteine 6, cysteine 9, cysteine 32, and cysteine 36. The segment at 6–36 (CYFCGQMLEPGTGKLYIKKDGSTYFMCSSKC) adopts a C4-type zinc-finger fold.

This sequence belongs to the eukaryotic ribosomal protein eL24 family. As to quaternary structure, part of the 50S ribosomal subunit. Forms a cluster with proteins L3 and L14. The cofactor is Zn(2+).

Its function is as follows. Binds to the 23S rRNA. The chain is Large ribosomal subunit protein eL24 from Methanosarcina mazei (strain ATCC BAA-159 / DSM 3647 / Goe1 / Go1 / JCM 11833 / OCM 88) (Methanosarcina frisia).